The following is a 257-amino-acid chain: Dihydroorotate dehydrogenase B (NAD(+)), electron transfer subunit (257 aa).

The region spanning 2–101 is the FAD-binding FR-type domain; that stretch reads IRQEKMRVVS…LGPIGNGFPV (100 aa). FAD-binding positions include 52–55, 69–71, and 76–77; these read RPIS, IYR, and GT. Positions 220, 225, 228, and 244 each coordinate [2Fe-2S] cluster.

The protein belongs to the PyrK family. In terms of assembly, heterotetramer of 2 PyrK and 2 PyrD type B subunits. [2Fe-2S] cluster is required as a cofactor. The cofactor is FAD.

Its pathway is pyrimidine metabolism; UMP biosynthesis via de novo pathway; orotate from (S)-dihydroorotate (NAD(+) route): step 1/1. In terms of biological role, responsible for channeling the electrons from the oxidation of dihydroorotate from the FMN redox center in the PyrD type B subunit to the ultimate electron acceptor NAD(+). This chain is Dihydroorotate dehydrogenase B (NAD(+)), electron transfer subunit, found in Lysinibacillus sphaericus (strain C3-41).